The following is a 263-amino-acid chain: 4-hydroxy-tetrahydrodipicolinate reductase (263 aa).

10-15 (GASGKM) is a binding site for NAD(+). R38 is a binding site for NADP(+). NAD(+)-binding positions include 97–99 (GTT) and 123–126 (APNF). H153 (proton donor/acceptor) is an active-site residue. A (S)-2,3,4,5-tetrahydrodipicolinate-binding site is contributed by H154. Residue K157 is the Proton donor of the active site. 163–164 (GT) lines the (S)-2,3,4,5-tetrahydrodipicolinate pocket.

This sequence belongs to the DapB family.

The protein localises to the cytoplasm. The catalysed reaction is (S)-2,3,4,5-tetrahydrodipicolinate + NAD(+) + H2O = (2S,4S)-4-hydroxy-2,3,4,5-tetrahydrodipicolinate + NADH + H(+). It carries out the reaction (S)-2,3,4,5-tetrahydrodipicolinate + NADP(+) + H2O = (2S,4S)-4-hydroxy-2,3,4,5-tetrahydrodipicolinate + NADPH + H(+). The protein operates within amino-acid biosynthesis; L-lysine biosynthesis via DAP pathway; (S)-tetrahydrodipicolinate from L-aspartate: step 4/4. Catalyzes the conversion of 4-hydroxy-tetrahydrodipicolinate (HTPA) to tetrahydrodipicolinate. The polypeptide is 4-hydroxy-tetrahydrodipicolinate reductase (Dehalococcoides mccartyi (strain CBDB1)).